The primary structure comprises 245 residues: Uridylate kinase (245 aa).

K12 to G15 is a binding site for ATP. G55 is a binding site for UMP. ATP is bound by residues G56 and R60. UMP is bound by residues D76 and A137 to T144. Residues T164, Y171, and D174 each contribute to the ATP site.

Belongs to the UMP kinase family. Homohexamer.

The protein localises to the cytoplasm. It catalyses the reaction UMP + ATP = UDP + ADP. The protein operates within pyrimidine metabolism; CTP biosynthesis via de novo pathway; UDP from UMP (UMPK route): step 1/1. Inhibited by UTP. Its function is as follows. Catalyzes the reversible phosphorylation of UMP to UDP. In Chlamydia trachomatis serovar D (strain ATCC VR-885 / DSM 19411 / UW-3/Cx), this protein is Uridylate kinase.